Reading from the N-terminus, the 461-residue chain is PTS system sucrose-specific EIIBC component (461 aa).

In terms of domain architecture, PTS EIIB type-1 spans 4–87 (KETAKRLIEL…SKEADIEREE (84 aa)). Cysteine 26 acts as the Phosphocysteine intermediate; for EIIB activity in catalysis. Residues 107-461 (KTLSNIFVPI…KINEDEERKK (355 aa)) enclose the PTS EIIC type-1 domain. The next 10 membrane-spanning stretches (helical) occupy residues 112–132 (IFVP…LLGM), 148–168 (LLDM…GVSA), 178–198 (LGAV…WGLA), 208–228 (FGFD…LLAV), 248–268 (LLVT…IAIG), 289–309 (AGFV…LTGV), 329–349 (LLPI…AVFF), 359–379 (IALP…IFGV), 387–407 (FIAA…THVA), and 430–450 (LIHY…AAFV).

Its subcellular location is the cell membrane. It carries out the reaction N(pros)-phospho-L-histidyl-[protein](out) + sucrose = sucrose 6(G)-phosphate(in) + L-histidyl-[protein]. Its function is as follows. The phosphoenolpyruvate-dependent sugar phosphotransferase system (sugar PTS), a major carbohydrate active transport system, catalyzes the phosphorylation of incoming sugar substrates concomitantly with their translocation across the cell membrane. This system is involved in sucrose transport. This Bacillus subtilis (strain 168) protein is PTS system sucrose-specific EIIBC component (sacP).